Consider the following 424-residue polypeptide: Oleosin-B3 (424 aa).

The interval 1–37 (MRNEIQNETAQTDQTQGSMFSFFNLFPFLLPMFEVIK) is polar. The next 3 membrane-spanning stretches (helical) occupy residues 16–36 (QGSM…FEVI), 38–58 (MVVA…TLSG), and 69–89 (LFII…VLAA). The hydrophobic stretch occupies residues 38–119 (MVVASVASVV…GIPESIKPSN (82 aa)). Tandem repeats lie at residues 111–120 (IPESIKPSNV), 121–130 (IPESIKPSNI), 131–140 (IPESIKPSNI), 141–150 (IPVSIKPSNI), 196–202 (EDKHGKG), 203–209 (ESKHGKG), 210–216 (ESKHGKG), 217–223 (ESTHGKG), 241–258 (KHGS…GSGG), 259–276 (KHES…GSGG), 277–294 (KHES…ESVG), 301–318 (KHES…GSGG), 319–336 (KHES…GSGG), 337–354 (RHEG…GSGG), 396–400 (SSDGS), 401–405 (SSDGS), 406–410 (SSDGS), and 411–415 (SSDGS). The interval 111–150 (IPESIKPSNVIPESIKPSNIIPESIKPSNIIPVSIKPSNI) is 4 X 10 AA tandem repeats of I-P-[EV]-S-I-K-P-S-N-[IV]. A disordered region spans residues 164-424 (KIKAKQEEKS…SSHGSGGKHI (261 aa)). Over residues 167 to 220 (AKQEEKSKGKSEDSSKGKGKSKGEDTTTDEDKHGKGESKHGKGESKHGKGESTH) the composition is skewed to basic and acidic residues. The segment at 196 to 223 (EDKHGKGESKHGKGESKHGKGESTHGKG) is 4 X 7 AA tandem repeats of E-[SD]-[KT]-H-G-K-G. The tract at residues 241–354 (KHGSGGSPMG…MGGGKHGSGG (114 aa)) is 6 X 18 AA tandem repeats of [KR]-H-[EG]-[SG]-G-G-[SA]-[PSA]-M-G-G-G-K-H-[GE]-S-[GV]-G. Positions 242 to 255 (HGSGGSPMGGGKHG) are enriched in gly residues. Residues 288-304 (GKHESVGKHGSGGKHES) show a composition bias toward basic and acidic residues. Residues 341–355 (GGSAMGGGKHGSGGK) show a composition bias toward gly residues. Residues 391–416 (SSTSESSDGSSSDGSSSDGSSSDGSS) are compositionally biased toward low complexity. The segment at 396-415 (SSDGSSSDGSSSDGSSSDGS) is 4 X 5 AA tandem repeats of S-S-D-G-S.

Belongs to the oleosin family. As to expression, the full-length protein is found in the tapetal lipid bodies of immature anthers, the proteolytically cleaved C-terminal product is found on the coats of pollen grains. No expression is detected in other flower organs, siliques or seedlings.

The protein resides in the lipid droplet. The protein localises to the membrane. Its function is as follows. Many of the major pollen coat proteins are derived from endoproteolytic cleavage of oleosin-like proteins. The sequence is that of Oleosin-B3 from Brassica napus (Rape).